A 598-amino-acid chain; its full sequence is UvrABC system protein C (598 aa).

Positions 11–91 constitute a GIY-YIG domain; that stretch reads QKPGVYIMHN…IKKYRPHYNI (81 aa). The UVR domain maps to 195–230; sequence KTTIKKLKKDMNRYAKNMEFEKAAMLRDQIDTIKIT.

This sequence belongs to the UvrC family. Interacts with UvrB in an incision complex.

The protein localises to the cytoplasm. Functionally, the UvrABC repair system catalyzes the recognition and processing of DNA lesions. UvrC both incises the 5' and 3' sides of the lesion. The N-terminal half is responsible for the 3' incision and the C-terminal half is responsible for the 5' incision. In Methanosphaera stadtmanae (strain ATCC 43021 / DSM 3091 / JCM 11832 / MCB-3), this protein is UvrABC system protein C.